Reading from the N-terminus, the 268-residue chain is Receptor expression-enhancing protein 2 (268 aa).

2 helical membrane-spanning segments follow: residues 1–21 (MVSW…YPAY) and 35–55 (YVKW…ETIT). The disordered stretch occupies residues 170 to 268 (GDDTHTAATL…TTANNVAESP (99 aa)). Residues 180–196 (PRAKTATRTVRATPVPA) are compositionally biased toward low complexity. Positions 199–216 (ESQHSSRSDDQSDSRTEH) are enriched in basic and acidic residues. A compositionally biased stretch (low complexity) spans 228-248 (RIAITRAAKKPAAAKTEQTTK). The segment covering 249-258 (TVKKAPKKKP) has biased composition (basic residues).

It belongs to the DP1 family. Interacts with odorant receptor proteins.

It localises to the membrane. May enhance the cell surface expression of odorant receptors. The sequence is that of Receptor expression-enhancing protein 2 (reep2) from Danio rerio (Zebrafish).